We begin with the raw amino-acid sequence, 213 residues long: Large ribosomal subunit protein uL18c (213 aa).

This sequence belongs to the universal ribosomal protein uL18 family.

The protein resides in the plastid. It localises to the apicoplast. The chain is Large ribosomal subunit protein uL18c (RPL18) from Plasmodium falciparum (isolate 3D7).